Reading from the N-terminus, the 252-residue chain is Homeobox protein EMX2 (252 aa).

The segment at residues 154 to 213 (PKRIRTAFSPSQLLRLEHAFEKNHYVVGAERKQLAHSLSLTETQVKVWFQNRRTKFKRQK) is a DNA-binding region (homeobox). Residues 212-252 (QKLEEEGSDSQQKKKGTHHINRWRIATKQASPEEIDVTSDD) are disordered. Basic residues predominate over residues 224 to 233 (KKKGTHHINR).

It belongs to the EMX homeobox family. In terms of assembly, interacts with translation initiation factor EIF4E. Cerebral cortex.

The protein localises to the nucleus. Its subcellular location is the cell projection. It localises to the axon. Functionally, transcription factor, which in cooperation with EMX1, acts to generate the boundary between the roof and archipallium in the developing brain. May function in combination with OTX1/2 to specify cell fates in the developing central nervous system. In the inner ear, it controls the distribution of GPR156 at hair cell boundaries, and regulates the organization of stereociliary bundles in opposite orientations across the line of polarity reversal (LPR). The polypeptide is Homeobox protein EMX2 (EMX2) (Homo sapiens (Human)).